A 404-amino-acid polypeptide reads, in one-letter code: SAC3 domain-containing protein 1 (404 aa).

2 disordered regions span residues 1–58 (MAGR…GTCP) and 77–117 (RLEV…QLRP). The segment covering 12 to 21 (PPRPAAPHPR) has biased composition (pro residues). The span at 87–101 (DPPRADPQRAVKEYS) shows a compositional bias: basic and acidic residues. The PCI domain maps to 203–379 (QVQEGFGSLR…TCKVLVESKL (177 aa)). Ser402 carries the phosphoserine modification.

Belongs to the SAC3 family. May be part of a SEM1-containing complex.

It is found in the cytoplasm. The protein resides in the cytoskeleton. The protein localises to the microtubule organizing center. Its subcellular location is the centrosome. It localises to the spindle. Its function is as follows. Involved in centrosome duplication and mitotic progression. The sequence is that of SAC3 domain-containing protein 1 (SAC3D1) from Homo sapiens (Human).